We begin with the raw amino-acid sequence, 46 residues long: Cysteine-rich venom protein asurin-1 (46 aa).

This sequence belongs to the CRISP family. In terms of processing, contains 8 disulfide bonds. In terms of tissue distribution, expressed by the venom gland.

It localises to the secreted. Its function is as follows. Blocks contraction of smooth muscle elicited by high potassium-induced depolarization, but does not block caffeine-stimulated contraction. May target voltage-gated calcium channels on smooth muscle. The polypeptide is Cysteine-rich venom protein asurin-1 (Austrelaps superbus (Lowland copperhead snake)).